A 293-amino-acid polypeptide reads, in one-letter code: Diaminopimelate epimerase (293 aa).

Residues Asn-15, Gln-47, and Asn-67 each coordinate substrate. Residue Cys-76 is the Proton donor of the active site. Residues 77–78 (GN), Asn-163, Asn-197, and 215–216 (ER) contribute to the substrate site. Residue Cys-224 is the Proton acceptor of the active site. 225–226 (GS) serves as a coordination point for substrate.

It belongs to the diaminopimelate epimerase family. As to quaternary structure, homodimer.

The protein resides in the cytoplasm. It catalyses the reaction (2S,6S)-2,6-diaminopimelate = meso-2,6-diaminopimelate. The protein operates within amino-acid biosynthesis; L-lysine biosynthesis via DAP pathway; DL-2,6-diaminopimelate from LL-2,6-diaminopimelate: step 1/1. In terms of biological role, catalyzes the stereoinversion of LL-2,6-diaminopimelate (L,L-DAP) to meso-diaminopimelate (meso-DAP), a precursor of L-lysine and an essential component of the bacterial peptidoglycan. The sequence is that of Diaminopimelate epimerase from Chelativorans sp. (strain BNC1).